Here is a 358-residue protein sequence, read N- to C-terminus: UDP-N-acetylglucosamine--N-acetylmuramyl-(pentapeptide) pyrophosphoryl-undecaprenol N-acetylglucosamine transferase (358 aa).

Residues 10 to 12 (TGG), N124, R165, S187, I243, and Q288 each bind UDP-N-acetyl-alpha-D-glucosamine.

The protein belongs to the glycosyltransferase 28 family. MurG subfamily.

The protein localises to the cell inner membrane. The enzyme catalyses di-trans,octa-cis-undecaprenyl diphospho-N-acetyl-alpha-D-muramoyl-L-alanyl-D-glutamyl-meso-2,6-diaminopimeloyl-D-alanyl-D-alanine + UDP-N-acetyl-alpha-D-glucosamine = di-trans,octa-cis-undecaprenyl diphospho-[N-acetyl-alpha-D-glucosaminyl-(1-&gt;4)]-N-acetyl-alpha-D-muramoyl-L-alanyl-D-glutamyl-meso-2,6-diaminopimeloyl-D-alanyl-D-alanine + UDP + H(+). Its pathway is cell wall biogenesis; peptidoglycan biosynthesis. Cell wall formation. Catalyzes the transfer of a GlcNAc subunit on undecaprenyl-pyrophosphoryl-MurNAc-pentapeptide (lipid intermediate I) to form undecaprenyl-pyrophosphoryl-MurNAc-(pentapeptide)GlcNAc (lipid intermediate II). This is UDP-N-acetylglucosamine--N-acetylmuramyl-(pentapeptide) pyrophosphoryl-undecaprenol N-acetylglucosamine transferase from Syntrophotalea carbinolica (strain DSM 2380 / NBRC 103641 / GraBd1) (Pelobacter carbinolicus).